Reading from the N-terminus, the 234-residue chain is Endonuclease NucS (234 aa).

This sequence belongs to the NucS endonuclease family.

It localises to the cytoplasm. Its function is as follows. Cleaves both 3' and 5' ssDNA extremities of branched DNA structures. The protein is Endonuclease NucS of Bifidobacterium adolescentis (strain ATCC 15703 / DSM 20083 / NCTC 11814 / E194a).